The primary structure comprises 391 residues: Probable protein phosphatase 2C 32 (391 aa).

A disordered region spans residues 1 to 53 (MSCTVAIPSSPVFSPSRRPLSCKAASASASPESVSVAASSPAQAAPPAGSPLR). Over residues 8 to 51 (PSSPVFSPSRRPLSCKAASASASPESVSVAASSPAQAAPPAGSP) the composition is skewed to low complexity. A helical transmembrane segment spans residues 95–115 (LVVPVCGGAAAAAAAAAVAAV). A PPM-type phosphatase domain is found at 129–386 (EFAVYCRRGK…DDISIVIIQL (258 aa)). 4 residues coordinate Mn(2+): D168, G169, D332, and D377.

The protein belongs to the PP2C family. Requires Mg(2+) as cofactor. Mn(2+) is required as a cofactor.

Its subcellular location is the membrane. It carries out the reaction O-phospho-L-seryl-[protein] + H2O = L-seryl-[protein] + phosphate. The enzyme catalyses O-phospho-L-threonyl-[protein] + H2O = L-threonyl-[protein] + phosphate. The sequence is that of Probable protein phosphatase 2C 32 from Oryza sativa subsp. japonica (Rice).